Here is a 391-residue protein sequence, read N- to C-terminus: O-methyltransferase ATR12 (391 aa).

Residues 233-234 (GG), Asp-259, and 279-280 (DF) contribute to the S-adenosyl-L-methionine site. His-299 serves as the catalytic Proton acceptor.

This sequence belongs to the class I-like SAM-binding methyltransferase superfamily. Cation-independent O-methyltransferase family. COMT subfamily.

The protein operates within mycotoxin biosynthesis. In terms of biological role, O-methyltransferase; part of the core atranone cluster (CAC) which products are predicted to catalyze most or all steps of mycotoxin atranone synthesis, starting from geranylgeranyl pyrophosphate (GGPP). The initial cyclization of GGPP to dolabellane is probably performed by the terpene cyclase ATR13. The Baeyer-Villiger oxidation near the end of the atranone synthesis, which converts atranones D and E to atranones F and G is predicted to be catalyzed by the monooxygenase ATR8. Of the CAC's other predicted gene products, the reducing PKS ATR6 might synthesize a polyketide chain. This polyketide is probably transferred onto the atranone backbone by the polyketide transferase ATR5. Other predicted CAC products include 4 oxygenases (ATR2, ATR3, ATR4, and ATR14), 3 short-chain reductases (ATR7, ATR9, and ATR10), and a methyltransferase (ATR12). These may all be involved in the various steps of atranone biosynthesis, although their specific roles must await experimental determination. The protein is O-methyltransferase ATR12 of Stachybotrys chlorohalonatus (strain IBT 40285).